Consider the following 1101-residue polypeptide: Coiled-coil domain-containing protein 150 (1101 aa).

Coiled coils occupy residues 106–299 (RLES…DLTS), 398–680 (AAHA…KEDN), 712–940 (DSEI…NYEQ), and 970–1033 (VRNK…EAHR). Basic and acidic residues predominate over residues 1055–1071 (SGEDRWQEKDQDVKHDV). The tract at residues 1055 to 1101 (SGEDRWQEKDQDVKHDVMSNQSVLHRWERKQNLRPMPKKYHSEVQRK) is disordered.

This Homo sapiens (Human) protein is Coiled-coil domain-containing protein 150 (CCDC150).